Consider the following 121-residue polypeptide: ATP synthase epsilon chain (121 aa).

Belongs to the ATPase epsilon chain family. In terms of assembly, F-type ATPases have 2 components, CF(1) - the catalytic core - and CF(0) - the membrane proton channel. CF(1) has five subunits: alpha(3), beta(3), gamma(1), delta(1), epsilon(1). CF(0) has three main subunits: a, b and c.

It is found in the cell membrane. In terms of biological role, produces ATP from ADP in the presence of a proton gradient across the membrane. This chain is ATP synthase epsilon chain, found in Mycolicibacterium vanbaalenii (strain DSM 7251 / JCM 13017 / BCRC 16820 / KCTC 9966 / NRRL B-24157 / PYR-1) (Mycobacterium vanbaalenii).